The primary structure comprises 300 residues: Putative 1-phosphofructokinase (300 aa).

Residues 214-219 (SDGAQG) and 246-247 (GD) contribute to the ATP site. Asp-247 (proton acceptor) is an active-site residue.

Belongs to the carbohydrate kinase PfkB family.

The catalysed reaction is beta-D-fructose 1-phosphate + ATP = beta-D-fructose 1,6-bisphosphate + ADP + H(+). Its function is as follows. Catalyzes the ATP-dependent phosphorylation of fructose-l-phosphate to fructose-l,6-bisphosphate. This is Putative 1-phosphofructokinase (fruK) from Mycoplasma pneumoniae (strain ATCC 29342 / M129 / Subtype 1) (Mycoplasmoides pneumoniae).